The sequence spans 129 residues: Lysozyme C (129 aa).

Residues 1–129 (KIYTRCELAA…VSKWIKDCKL (129 aa)) form the C-type lysozyme domain. 4 disulfide bridges follow: C6–C127, C30–C115, C64–C80, and C76–C94. Catalysis depends on residues E35 and D52.

It belongs to the glycosyl hydrolase 22 family. As to quaternary structure, monomer.

It localises to the secreted. It carries out the reaction Hydrolysis of (1-&gt;4)-beta-linkages between N-acetylmuramic acid and N-acetyl-D-glucosamine residues in a peptidoglycan and between N-acetyl-D-glucosamine residues in chitodextrins.. Functionally, lysozymes have primarily a bacteriolytic function; those in tissues and body fluids are associated with the monocyte-macrophage system and enhance the activity of immunoagents. This is Lysozyme C (LYZ) from Crax fasciolata (Bare-faced curassow).